We begin with the raw amino-acid sequence, 57 residues long: Aminopeptidase A (57 aa).

At 1–57 the chain is on the extracellular side; it reads YLTDHYFKVDLNSTVTQQRFLLDPSELAGITIMQPSDSNIEWLKQYRDDVATWLENS. Asn-12 is a glycosylation site (N-linked (GlcNAc...) asparagine).

Belongs to the peptidase M1 family. Homodimer; disulfide-linked. It depends on Zn(2+) as a cofactor.

Its subcellular location is the cell membrane. The catalysed reaction is Release of N-terminal glutamate (and to a lesser extent aspartate) from a peptide.. Its activity is regulated as follows. Inhibited by the aminopeptidase competitive inhibitors amastatin (Leu and acidic inhibitor), and bestatin (Leu inhibitor), by chelating agents EDTA, and 1,10-Phenanthroline, as well as by Zn(2+) ions. Substrate specificity is modulated by Ca(2+), Ba(2+), and Mn(2+) ions which enhances the enzymatic activity for cleavage of acidic residues. In terms of biological role, venom protein that cleaves N-terminal acidic residues from peptides with high potency in presence of calcium. It may have several roles in venom including alteration of blood pressure by cleaving circulating angiotensin-2, general degradation of host tissue, increase of permeability to other venom components, and/or processing of other toxins in the venom. The chain is Aminopeptidase A from Gloydius blomhoffii (Mamushi).